Reading from the N-terminus, the 24-residue chain is LFGFLIPLLPHIIGAIPQVIGAIR.

The protein belongs to the grammistin family. Group 1 subfamily. Exists as aggregates of 3-4 molecules. In terms of tissue distribution, expressed by the skin glands.

It localises to the secreted. Its function is as follows. Thanks to its abundant amphiphilic alpha-helices, it may integrate into membrane phospholipids, leading to lysis of the membrane. Its high hemolytic activity is inhibited by phospholipids, but not by cholesterol. Has antibacterial activity with a broad spectrum against various species of bacteria including both Gram-positive and Gram-negative groups. Also has high ichthyotoxic activity. This Grammistes sexlineatus (Goldenstriped soapfish) protein is Grammistin Gs G.